We begin with the raw amino-acid sequence, 142 residues long: Large ribosomal subunit protein uL22c (142 aa).

The protein belongs to the universal ribosomal protein uL22 family. Part of the 50S ribosomal subunit.

Its subcellular location is the plastid. The protein resides in the chloroplast. This protein binds specifically to 23S rRNA. Its function is as follows. The globular domain of the protein is located near the polypeptide exit tunnel on the outside of the subunit, while an extended beta-hairpin is found that lines the wall of the exit tunnel in the center of the 70S ribosome. The protein is Large ribosomal subunit protein uL22c (rpl22) of Carica papaya (Papaya).